A 122-amino-acid chain; its full sequence is Large ribosomal subunit protein uL14 (122 aa).

It belongs to the universal ribosomal protein uL14 family. Part of the 50S ribosomal subunit. Forms a cluster with proteins L3 and L19. In the 70S ribosome, L14 and L19 interact and together make contacts with the 16S rRNA in bridges B5 and B8.

Its function is as follows. Binds to 23S rRNA. Forms part of two intersubunit bridges in the 70S ribosome. This is Large ribosomal subunit protein uL14 from Shewanella frigidimarina (strain NCIMB 400).